The sequence spans 148 residues: Male-specific protein scotti (148 aa).

The segment at 56–78 (PQEPPLGVFPAQGGPNGPPRLRK) is disordered. Residue Asn129 is glycosylated (N-linked (GlcNAc...) asparagine).

This sequence belongs to the male-specific scotti family.

Post-meiotically transcribed gene that has a role in late spermiogenesis; required for actin cone progression during spermatid individualization. In Drosophila sechellia (Fruit fly), this protein is Male-specific protein scotti.